The primary structure comprises 449 residues: Tubulin beta chain (449 aa).

Glutamine 11, glutamate 69, serine 138, glycine 142, threonine 143, glycine 144, asparagine 204, and asparagine 226 together coordinate GTP. Glutamate 69 provides a ligand contact to Mg(2+). The tract at residues 426–449 (QDATAEEEGEFDEEEGVMDAEGAA) is disordered. Acidic residues predominate over residues 429-443 (TAEEEGEFDEEEGVM).

Belongs to the tubulin family. Dimer of alpha and beta chains. A typical microtubule is a hollow water-filled tube with an outer diameter of 25 nm and an inner diameter of 15 nM. Alpha-beta heterodimers associate head-to-tail to form protofilaments running lengthwise along the microtubule wall with the beta-tubulin subunit facing the microtubule plus end conferring a structural polarity. Microtubules usually have 13 protofilaments but different protofilament numbers can be found in some organisms and specialized cells. The cofactor is Mg(2+).

It is found in the cytoplasm. The protein resides in the cytoskeleton. In terms of biological role, tubulin is the major constituent of microtubules, a cylinder consisting of laterally associated linear protofilaments composed of alpha- and beta-tubulin heterodimers. Microtubules grow by the addition of GTP-tubulin dimers to the microtubule end, where a stabilizing cap forms. Below the cap, tubulin dimers are in GDP-bound state, owing to GTPase activity of alpha-tubulin. The sequence is that of Tubulin beta chain from Eimeria tenella (Coccidian parasite).